Consider the following 234-residue polypeptide: Sugar fermentation stimulation protein homolog (234 aa).

The protein belongs to the SfsA family.

The chain is Sugar fermentation stimulation protein homolog from Shewanella pealeana (strain ATCC 700345 / ANG-SQ1).